Consider the following 189-residue polypeptide: Glycerol-3-phosphate acyltransferase (189 aa).

Helical transmembrane passes span 1-21 (MFWL…AIVL), 77-97 (LQEQ…PVYF), 111-131 (MLMG…LLTF), and 151-171 (LLAW…VMIV).

Belongs to the PlsY family. Probably interacts with PlsX.

It is found in the cell inner membrane. It catalyses the reaction an acyl phosphate + sn-glycerol 3-phosphate = a 1-acyl-sn-glycero-3-phosphate + phosphate. The protein operates within lipid metabolism; phospholipid metabolism. Its function is as follows. Catalyzes the transfer of an acyl group from acyl-phosphate (acyl-PO(4)) to glycerol-3-phosphate (G3P) to form lysophosphatidic acid (LPA). This enzyme utilizes acyl-phosphate as fatty acyl donor, but not acyl-CoA or acyl-ACP. In Pseudomonas putida (strain W619), this protein is Glycerol-3-phosphate acyltransferase.